Here is a 962-residue protein sequence, read N- to C-terminus: Leucine--tRNA ligase (962 aa).

Positions Pro40–His51 match the 'HIGH' region motif. The interval Ser548–Ser570 is disordered. A 'KMSKS' region motif is present at residues Lys737 to Ser741. Lys740 provides a ligand contact to ATP.

The protein belongs to the class-I aminoacyl-tRNA synthetase family.

The protein localises to the cytoplasm. The catalysed reaction is tRNA(Leu) + L-leucine + ATP = L-leucyl-tRNA(Leu) + AMP + diphosphate. The sequence is that of Leucine--tRNA ligase from Christiangramia forsetii (strain DSM 17595 / CGMCC 1.15422 / KT0803) (Gramella forsetii).